Reading from the N-terminus, the 394-residue chain is Shematrin-like protein 2 (394 aa).

Positions 1–19 are cleaved as a signal peptide; that stretch reads MKPFISLASLIVLIASASA.

In terms of tissue distribution, prismatic layer of shell (at protein level). Expressed primarily in the mantle with highest level in the mantle edge and lower level in the mantle pallium.

Its subcellular location is the secreted. This is Shematrin-like protein 2 from Pinctada maxima (Silver-lipped pearl oyster).